A 338-amino-acid chain; its full sequence is MAVNLLKKNSLALVASLLLAGHVQATELLNSSYDVSRELFAALNPPFEQQWAKDNGGDKLTIKQSHAGSSKQALAILQGLKADVVTYNQVTDVQILHDKGKLIPADWQSRLPNNSSPFYSTMGFLVRKGNPKNIHDWNDLVRSDVKLIFPNPKTSGNARYTYLAAWGAADKADGGDKGKTEQFMTQFLKNVEVFDTGGRGATTTFAERGLGDVLISFESEVNNIRKQYEAQGFEVVIPKTNILAEFPVAWVDKNVQANGTEKAAKAYLNWLYSPQAQTIITDYYYRVNNPEVMDKLKDKFPQTELFRVEDKFGSWPEVMKTHFTSGGELDKLLAAGRN.

An N-terminal signal peptide occupies residues 1-25 (MAVNLLKKNSLALVASLLLAGHVQA).

Belongs to the prokaryotic sulfate-binding protein family. The complex is composed of two ATP-binding proteins (CysA), two transmembrane proteins (CysT and CysW) and a solute-binding protein (CysP).

The protein resides in the periplasm. Functionally, part of the ABC transporter complex CysAWTP (TC 3.A.1.6.1) involved in sulfate/thiosulfate import. This protein specifically binds thiosulfate and is involved in its transmembrane transport. The polypeptide is Thiosulfate-binding protein (cysP) (Escherichia coli (strain K12)).